Consider the following 363-residue polypeptide: Crh-like protein 3 (363 aa).

The first 19 residues, Met1 to Ala19, serve as a signal peptide directing secretion. Cys25 and Cys32 are disulfide-bonded. The 212-residue stretch at Asn26 to Leu237 folds into the GH16 domain. Residues Asn41, Asn47, and Asn56 are each glycosylated (N-linked (GlcNAc...) asparagine). Residue Glu118 is the Nucleophile of the active site. Catalysis depends on Glu122, which acts as the Proton donor. Glu122 contributes to the chitin binding site. 3 N-linked (GlcNAc...) asparagine glycosylation sites follow: Asn127, Asn141, and Asn161. Residues Arg203, Trp207, and Thr218 each contribute to the chitin site. N-linked (GlcNAc...) asparagine glycosylation is found at Asn252 and Asn269. A helical membrane pass occupies residues Val298–Ile318.

It belongs to the glycosyl hydrolase 16 family. CRH1 subfamily. In terms of processing, the GPI-like anchor contains a phosphoceramide lipid group. The anchor position has not been determined.

The protein localises to the cell membrane. The protein resides in the secreted. It localises to the cell wall. The catalysed reaction is Random endo-hydrolysis of N-acetyl-beta-D-glucosaminide (1-&gt;4)-beta-linkages in chitin and chitodextrins.. In terms of biological role, dual chitinase/transglycosylase that plays a role in cell wall architecture. Chitinase and transglycosylase activities are coupled. Required for the polysaccharide cross-linking at the septa and the cell wall. More specifically, transfers chitin to 1,6-beta-glucan in the cell wall. The chain is Crh-like protein 3 from Aspergillus fumigatus (strain ATCC MYA-4609 / CBS 101355 / FGSC A1100 / Af293) (Neosartorya fumigata).